Consider the following 556-residue polypeptide: MSEADARPSNFIRQIIDKDLADGKHTSVHTRFPPEPNGYLHIGHAKSICLNFGIAQDYQGKCNLRFDDTNPEKEDIEYVESIKNDVSWLGFEWDDEICYSSNYFDKLYEYAVELINKGLAYVDELSPEQIREYRGTLTAPGKPSPYRDRSAEENLALFEKMRDGGFEEGKACLRAKIDMASSFMVMRDPVLYRVRFASHHQTGDKWCIYPMYDFTHCISDALEGITHSICTLEFMDNRRLYDWVLDNITIDCRPHQYEFSRLNLEYTVMSKRKLNQLVTEKLVNGWDDPRMPTISGLRRRGFTPASIREFCKRIGVTKQENMIEFSSLESCIRDDLNENAPRAMAVLDPVKLVIENFPAGEVENLTVANHPNKPEMGEREVPFSREIWIEREDFREEANKKYKRLVLGSEVRLRGAYVIKAERVEKDDEGNITTIFCTYDSETLGVNPADGRKVRGVIHWVSADKGVPAEIRLYDRLFTVPNPAAADDFASTINPESLTVMNGFVEPSLVEAEAEKGYQFERMGYFCADSKDSSKEHLVFNRTVGLRDTWAKIEAK.

Residues 34–44 carry the 'HIGH' region motif; sequence PEPNGYLHIGH. Residues 35–37 and 41–47 each bind ATP; these read EPN and HIGHAKS. L-glutamine is bound by residues Asp-67 and Tyr-212. Residues Thr-231, 261–262, and 269–271 contribute to the ATP site; these read RL and MSK. Positions 268 to 272 match the 'KMSKS' region motif; that stretch reads VMSKR.

Belongs to the class-I aminoacyl-tRNA synthetase family. Monomer.

It is found in the cytoplasm. It catalyses the reaction tRNA(Gln) + L-glutamine + ATP = L-glutaminyl-tRNA(Gln) + AMP + diphosphate. In Vibrio vulnificus (strain YJ016), this protein is Glutamine--tRNA ligase.